Reading from the N-terminus, the 510-residue chain is Tryptophan 6-hydroxylase fscE (510 aa).

A helical transmembrane segment spans residues 11 to 31; the sequence is LLPIEGVIILVFVLSCFSLAI. Residue Cys-452 participates in heme binding.

The protein belongs to the cytochrome P450 family. Heme is required as a cofactor.

The protein localises to the membrane. It functions in the pathway secondary metabolite biosynthesis. In terms of biological role, tryptophan 6-hydroxylase; part of the fragmented gene cluster that mediates the biosynthesis of fusarochromene, a tryptophan-derived metabolite closely related to a group of mycotoxins including fusarochromanone. Within the pathway, fscE hydroxalates the first intermediate D-tryptophan to yield 6-hydroxytryptophan. The first step of the pathway is the epimerization of L-tryptophan to D-tryptophan in the presence of the NRPS-like tryptophan epimerase fscC. D-tryptophan is subsequently hydroxylated by the tryptophan 6-hydroxylase fscE to yield 6-hydroxytryptophan. The pyrrole ring undergoes cleavaged by the tryptophan 2,3-dioxygenase fscD and is finally converted to 4-hydroxykyrunenine by the hydrolase fscH. The NRPS-like oxidoreductase fscA reduces the carboxyl group to primary alcohol and the DMATS-type prenyltransferase fscG performs prenylation, followed by the formation of a chromene ring catalyzed by the oxidoreductase fscI, which leads to desacetylfusarochromene. Epoxidation by fscF and rearrangement reactions of chromene double bonds convert compound desacetylfusarochromene to fusarochromanones. Although specific acetyltransferases were not found near the fsc gene cluster, several predicted enzymes containing the N-acetyltransferase superfamily domain are present in the genome of F.equiseti. These predicted enzymes may have the potential to convert desacetylfusarochromene to fusarochromene. This chain is Tryptophan 6-hydroxylase fscE, found in Fusarium equiseti (Fusarium scirpi).